The chain runs to 38 residues: uncharacterized protein (38 aa).

This is an uncharacterized protein from Treponema pallidum (strain Nichols).